The following is a 184-amino-acid chain: Elongation factor P 1 (184 aa).

It belongs to the elongation factor P family.

The protein localises to the cytoplasm. It functions in the pathway protein biosynthesis; polypeptide chain elongation. Its function is as follows. Involved in peptide bond synthesis. Stimulates efficient translation and peptide-bond synthesis on native or reconstituted 70S ribosomes in vitro. Probably functions indirectly by altering the affinity of the ribosome for aminoacyl-tRNA, thus increasing their reactivity as acceptors for peptidyl transferase. This Protochlamydia amoebophila (strain UWE25) protein is Elongation factor P 1 (efp1).